The primary structure comprises 375 residues: MIKIGSALLVDQGSGLVRTGWLKALAEDIAQLRAEGREVLIVSSGAIAVGRRSLHLEPGRMRLDEKQAAAAAGQIELAHAYRTVMADHAINVAQLLLTLDDSENRRRYLNARNCLETLLRLGVIPVINENDTVTTQEIRFGDNDRLAARVAQMACADALILLSDIDGLYTADPHRDPEARFIPTVTALTPEIAAMAGAALTPHGTGGMVTKLLAARICMDAGCAMAIAPGKDDHALRLLRQGGRQTWFLPAEEPRTARKAWISGALKAEGTLWVDDGAARALAAGSSLLPPGVRTVEGDFQRGAAVRVVGLDGSPLAKGLIAYPSDEARLLVGHRSGDIEALLGYRGREELIHRDDLVLDSRFRHRDEDGEGHRS.

An ATP-binding site is contributed by Lys3. Substrate-binding residues include Ser44, Asp131, and Asn143. Residues 163 to 164 (SD) and 205 to 211 (TGGMVTK) each bind ATP. In terms of domain architecture, PUA spans 269 to 346 (EGTLWVDDGA…GDIEALLGYR (78 aa)).

Belongs to the glutamate 5-kinase family.

The protein localises to the cytoplasm. It carries out the reaction L-glutamate + ATP = L-glutamyl 5-phosphate + ADP. It participates in amino-acid biosynthesis; L-proline biosynthesis; L-glutamate 5-semialdehyde from L-glutamate: step 1/2. Its function is as follows. Catalyzes the transfer of a phosphate group to glutamate to form L-glutamate 5-phosphate. This is Glutamate 5-kinase from Rhodospirillum rubrum (strain ATCC 11170 / ATH 1.1.1 / DSM 467 / LMG 4362 / NCIMB 8255 / S1).